Here is a 51-residue protein sequence, read N- to C-terminus: Insulin (51 aa).

3 disulfide bridges follow: cysteine 7–cysteine 37, cysteine 19–cysteine 50, and cysteine 36–cysteine 41.

Belongs to the insulin family. In terms of assembly, heterodimer of a B chain and an A chain linked by two disulfide bonds.

It localises to the secreted. Insulin decreases blood glucose concentration. It increases cell permeability to monosaccharides, amino acids and fatty acids. It accelerates glycolysis, the pentose phosphate cycle, and glycogen synthesis in liver. In Meleagris gallopavo (Wild turkey), this protein is Insulin (INS).